The following is a 165-amino-acid chain: Small ribosomal subunit protein uS5 (165 aa).

Positions 10 to 73 (LVEKLVAVDR…EAARRNMITV (64 aa)) constitute an S5 DRBM domain.

It belongs to the universal ribosomal protein uS5 family. Part of the 30S ribosomal subunit. Contacts proteins S4 and S8.

With S4 and S12 plays an important role in translational accuracy. In terms of biological role, located at the back of the 30S subunit body where it stabilizes the conformation of the head with respect to the body. This chain is Small ribosomal subunit protein uS5, found in Acinetobacter baylyi (strain ATCC 33305 / BD413 / ADP1).